Consider the following 529-residue polypeptide: Bifunctional purine biosynthesis protein PurH (529 aa).

Positions 1–148 constitute an MGS-like domain; sequence MTNRNVIKNV…KNYKNVLVVT (148 aa).

The protein belongs to the PurH family.

The enzyme catalyses (6R)-10-formyltetrahydrofolate + 5-amino-1-(5-phospho-beta-D-ribosyl)imidazole-4-carboxamide = 5-formamido-1-(5-phospho-D-ribosyl)imidazole-4-carboxamide + (6S)-5,6,7,8-tetrahydrofolate. It catalyses the reaction IMP + H2O = 5-formamido-1-(5-phospho-D-ribosyl)imidazole-4-carboxamide. Its pathway is purine metabolism; IMP biosynthesis via de novo pathway; 5-formamido-1-(5-phospho-D-ribosyl)imidazole-4-carboxamide from 5-amino-1-(5-phospho-D-ribosyl)imidazole-4-carboxamide (10-formyl THF route): step 1/1. It participates in purine metabolism; IMP biosynthesis via de novo pathway; IMP from 5-formamido-1-(5-phospho-D-ribosyl)imidazole-4-carboxamide: step 1/1. The chain is Bifunctional purine biosynthesis protein PurH from Buchnera aphidicola subsp. Baizongia pistaciae (strain Bp).